Consider the following 358-residue polypeptide: CCAAT/enhancer-binding protein alpha (358 aa).

The segment at 1-55 is disordered; the sequence is MESADFYEAEPRPPMSSHLQSPPHAPSSAAFGFPRGAGPAQPPAPPAAPEPLGGI. Residues 1–70 are required to repress E2F1:TFDP1-mediated transcription, to inhibit cell cycle and to induce adipocyte differentiation; the sequence is MESADFYEAE…SIDISAYIDP (70 aa). A compositionally biased stretch (low complexity) spans 29–39; sequence AAFGFPRGAGP. Residues 40 to 49 show a composition bias toward pro residues; the sequence is AQPPAPPAAP. A required for interaction with TRIB1 region spans residues 54–72; it reads GICEHETSIDISAYIDPAA. Positions 128–204 are required to induce adipocyte differentiation; it reads PPGYGCAAAG…HPPPAHLAAP (77 aa). The residue at position 161 (K161) is an N6-acetyllysine; alternate. A Glycyl lysine isopeptide (Lys-Gly) (interchain with G-Cter in SUMO2); alternate cross-link involves residue K161. 2 disordered regions span residues 178–201 and 217–291; these read LFPYQPPPPPPPSHPHPHPPPAHL and TMHL…RRER. Pro residues-rich tracts occupy residues 181–199 and 224–238; these read YQPPPPPPPSHPHPHPPPA and HPTPPPTPVPSPHPA. The interval 182–198 is required to functionally cooperate with SREBF1 in promoter activation; sequence QPPPPPPPSHPHPHPPP. S190 bears the Phosphoserine mark. Phosphothreonine; by GSK3 is present on residues T226 and T230. S234 bears the Phosphoserine; by GSK3 mark. Residues 239-259 show a composition bias toward low complexity; the sequence is PALGAAGLPGPGSALKGLGAA. An interaction with FOXO1 region spans residues 244 to 358; it reads AGLPGPGSAL…SLVKAMGNCA (115 aa). Residues 276–291 are compositionally biased toward basic and acidic residues; it reads KSVDKNSNEYRVRRER. Positions 282 to 345 constitute a bZIP domain; sequence SNEYRVRRER…DTLRGIFRQL (64 aa). The DNA-binding element occupies 285–300; it reads YRVRRERNNIAVRKSR. Residues 286–313 are basic motif; the sequence is RVRRERNNIAVRKSRDKAKQRNVETQQK. Residues 317–345 are leucine-zipper; the sequence is LTSDNDRLRKRVEQLSRELDTLRGIFRQL.

It belongs to the bZIP family. C/EBP subfamily. Binds DNA as a homodimer and as a heterodimer. Can form stable heterodimers with CEBPB, CEBPD, CEBPE and CEBPG. Interacts with PRDM16. Interacts with UBN1. Interacts with ZNF638; this interaction increases transcriptional activation. Interacts with the complex TFDP2:E2F1; the interaction prevents CEBPA binding to target gene promoters and represses its transcriptional activity. Interacts with RB1. Interacts (when phosphorylated at Ser-190) with CDK2, CDK4, E2F4 and SMARCA2. Interacts with SREBPF1. Interacts with FOXO1 (via the Fork-head domain); the interaction increases when FOXO1 is deacetylated. Interacts with SIX1. Interacts (via recognition sequence) with TRIB1. Interacts (via bZIP domain) with OVOL2 (via zinc-finger domains); the interaction inhibits the transcription factor activity of CEBPA and is required to repress adipogenesis. As to quaternary structure, interacts with TAF1A and UBTF. In terms of assembly, interacts with TAF1A and UBTF. Interacts with NPM1. (Microbial infection) Interacts with HBV protein X. As to quaternary structure, (Microbial infection) Interacts with Epstein-Barr virus lytic switch protein BZLF1; this interaction induces G1 cell cycle arrest. In terms of processing, phosphorylation at Ser-190 is required for interaction with CDK2, CDK4 and SWI/SNF complex leading to cell cycle inhibition. Dephosphorylated at Ser-190 by protein phosphatase 2A (PP2A) through PI3K/AKT signaling pathway regulation. Phosphorylation at Thr-226 and Thr-230 by GSK3 is constitutive in adipose tissue and lung. In liver, both Thr-226 and Thr-230 are phosphorylated only during feeding but not during fasting. Phosphorylation of the GSK3 consensus sites selectively decreases transactivation activity on IRE-controlled promoters. Sumoylated, sumoylation blocks the inhibitory effect on cell proliferation by disrupting the interaction with SMARCA2. Post-translationally, ubiquitinated by COP1 upon interaction with TRIB1.

It localises to the nucleus. The protein localises to the nucleolus. Its function is as follows. Transcription factor that coordinates proliferation arrest and the differentiation of myeloid progenitors, adipocytes, hepatocytes, and cells of the lung and the placenta. Binds directly to the consensus DNA sequence 5'-T[TG]NNGNAA[TG]-3' acting as an activator on distinct target genes. During early embryogenesis, plays essential and redundant functions with CEBPB. Essential for the transition from common myeloid progenitors (CMP) to granulocyte/monocyte progenitors (GMP). Critical for the proper development of the liver and the lung. Necessary for terminal adipocyte differentiation, is required for postnatal maintenance of systemic energy homeostasis and lipid storage. To regulate these different processes at the proper moment and tissue, interplays with other transcription factors and modulators. Down-regulates the expression of genes that maintain cells in an undifferentiated and proliferative state through E2F1 repression, which is critical for its ability to induce adipocyte and granulocyte terminal differentiation. Reciprocally E2F1 blocks adipocyte differentiation by binding to specific promoters and repressing CEBPA binding to its target gene promoters. Proliferation arrest also depends on a functional binding to SWI/SNF complex. In liver, regulates gluconeogenesis and lipogenesis through different mechanisms. To regulate gluconeogenesis, functionally cooperates with FOXO1 binding to IRE-controlled promoters and regulating the expression of target genes such as PCK1 or G6PC1. To modulate lipogenesis, interacts and transcriptionally synergizes with SREBF1 in promoter activation of specific lipogenic target genes such as ACAS2. In adipose tissue, seems to act as FOXO1 coactivator accessing to ADIPOQ promoter through FOXO1 binding sites. In terms of biological role, can act as dominant-negative. Binds DNA and have transctivation activity, even if much less efficiently than isoform 2. Does not inhibit cell proliferation. Directly and specifically enhances ribosomal DNA transcription interacting with RNA polymerase I-specific cofactors and inducing histone acetylation. The protein is CCAAT/enhancer-binding protein alpha of Homo sapiens (Human).